The chain runs to 282 residues: Bifunctional protein FolD (282 aa).

Residues 164–166 and Ser189 contribute to the NADP(+) site; that span reads GRS.

The protein belongs to the tetrahydrofolate dehydrogenase/cyclohydrolase family. Homodimer.

The enzyme catalyses (6R)-5,10-methylene-5,6,7,8-tetrahydrofolate + NADP(+) = (6R)-5,10-methenyltetrahydrofolate + NADPH. It carries out the reaction (6R)-5,10-methenyltetrahydrofolate + H2O = (6R)-10-formyltetrahydrofolate + H(+). The protein operates within one-carbon metabolism; tetrahydrofolate interconversion. Its function is as follows. Catalyzes the oxidation of 5,10-methylenetetrahydrofolate to 5,10-methenyltetrahydrofolate and then the hydrolysis of 5,10-methenyltetrahydrofolate to 10-formyltetrahydrofolate. The polypeptide is Bifunctional protein FolD (Streptococcus suis (strain 05ZYH33)).